A 306-amino-acid chain; its full sequence is Curved DNA-binding protein (306 aa).

The region spanning 5–69 (DYYAIMGVKP…QRRAEYDQMW (65 aa)) is the J domain.

Its subcellular location is the cytoplasm. It localises to the nucleoid. Functionally, DNA-binding protein that preferentially recognizes a curved DNA sequence. It is probably a functional analog of DnaJ; displays overlapping activities with DnaJ, but functions under different conditions, probably acting as a molecular chaperone in an adaptive response to environmental stresses other than heat shock. Lacks autonomous chaperone activity; binds native substrates and targets them for recognition by DnaK. Its activity is inhibited by the binding of CbpM. In Shigella dysenteriae serotype 1 (strain Sd197), this protein is Curved DNA-binding protein.